The sequence spans 290 residues: Pyridoxal 5'-phosphate synthase subunit PdxS (290 aa).

Aspartate 22 lines the D-ribose 5-phosphate pocket. Lysine 79 serves as the catalytic Schiff-base intermediate with D-ribose 5-phosphate. A D-ribose 5-phosphate-binding site is contributed by glycine 151. Arginine 163 serves as a coordination point for D-glyceraldehyde 3-phosphate. Residues glycine 212 and 233–234 contribute to the D-ribose 5-phosphate site; that span reads GS.

This sequence belongs to the PdxS/SNZ family. As to quaternary structure, in the presence of PdxT, forms a dodecamer of heterodimers.

The catalysed reaction is aldehydo-D-ribose 5-phosphate + D-glyceraldehyde 3-phosphate + L-glutamine = pyridoxal 5'-phosphate + L-glutamate + phosphate + 3 H2O + H(+). It functions in the pathway cofactor biosynthesis; pyridoxal 5'-phosphate biosynthesis. In terms of biological role, catalyzes the formation of pyridoxal 5'-phosphate from ribose 5-phosphate (RBP), glyceraldehyde 3-phosphate (G3P) and ammonia. The ammonia is provided by the PdxT subunit. Can also use ribulose 5-phosphate and dihydroxyacetone phosphate as substrates, resulting from enzyme-catalyzed isomerization of RBP and G3P, respectively. The polypeptide is Pyridoxal 5'-phosphate synthase subunit PdxS (Clostridium botulinum (strain Langeland / NCTC 10281 / Type F)).